The chain runs to 167 residues: uncharacterized protein (167 aa).

3 residues coordinate a divalent metal cation: His-48, His-127, and His-131.

It belongs to the DinB family.

This is an uncharacterized protein from Bacillus subtilis (strain 168).